The primary structure comprises 306 residues: UDP-N-acetylenolpyruvoylglucosamine reductase (306 aa).

The region spanning 29–193 (RVGGPADWLF…IRASLRGTPD (165 aa)) is the FAD-binding PCMH-type domain. Arg-173 is an active-site residue. Ser-222 functions as the Proton donor in the catalytic mechanism. The active site involves Glu-292.

The protein belongs to the MurB family. The cofactor is FAD.

The protein localises to the cytoplasm. It catalyses the reaction UDP-N-acetyl-alpha-D-muramate + NADP(+) = UDP-N-acetyl-3-O-(1-carboxyvinyl)-alpha-D-glucosamine + NADPH + H(+). Its pathway is cell wall biogenesis; peptidoglycan biosynthesis. Functionally, cell wall formation. The sequence is that of UDP-N-acetylenolpyruvoylglucosamine reductase from Gluconobacter oxydans (strain 621H) (Gluconobacter suboxydans).